Reading from the N-terminus, the 477-residue chain is MDFKKVFELGKFSDLELILVDKTNSLSINVHKVILYSAIPYFTTMFDNFKEKDCPSIKMEVIDVVVVSDIIKSFYGIETNNDPDWEYLLKEYISLDYLQLSCTLPDNIKVPDECFETLLDLVEIIGYNSKTIDMLANNLPNDFNLSTLPIELLREIESRYYDFYTMIIDRDNRMYSFNMCRKKLLQVTNKKYDDMYYFSVNDNLVLKASDKKIYTCNLSTKILKEHKENISMTDFHHHHLGETDIFIPENEAFKENIKNRIQKYLNNSSSNDGITEIYYSPDLTQIAVIFMLYQEESGEMYWLFIYDCKSDKLKKIYFKFDRISNVLFVPDGVIFYTHCSQKVIAWSNNKFQDVCCSLKHVKQITYDLGDNLLILTHNKFIVYSLNNKCVVNQVNCVLDKIEFVSKEIIIGYHKFYTNKSCVTNTKIIMYNILTGNETNKINVDLEIYKLVVVPDKARTKQKLKEYIESISTERISS.

In terms of domain architecture, BTB spans Ser13–Pro83.

This sequence belongs to the mimivirus BTB/WD family.

The chain is Putative BTB/POZ domain-containing protein R830 from Acanthamoeba polyphaga mimivirus (APMV).